Here is a 237-residue protein sequence, read N- to C-terminus: 2-C-methyl-D-erythritol 4-phosphate cytidylyltransferase (237 aa).

Belongs to the IspD/TarI cytidylyltransferase family. IspD subfamily.

It carries out the reaction 2-C-methyl-D-erythritol 4-phosphate + CTP + H(+) = 4-CDP-2-C-methyl-D-erythritol + diphosphate. It functions in the pathway isoprenoid biosynthesis; isopentenyl diphosphate biosynthesis via DXP pathway; isopentenyl diphosphate from 1-deoxy-D-xylulose 5-phosphate: step 2/6. Functionally, catalyzes the formation of 4-diphosphocytidyl-2-C-methyl-D-erythritol from CTP and 2-C-methyl-D-erythritol 4-phosphate (MEP). This chain is 2-C-methyl-D-erythritol 4-phosphate cytidylyltransferase, found in Acidithiobacillus ferrooxidans (strain ATCC 23270 / DSM 14882 / CIP 104768 / NCIMB 8455) (Ferrobacillus ferrooxidans (strain ATCC 23270)).